Here is a 129-residue protein sequence, read N- to C-terminus: MYDNLKSLGITNPDDIDRYSLRQEANNDILKIYFRKDKGEFFAKSVKFKYPRQRKTIVADNSGQGYKEINEISPNLRYVIDELDKICQQEQVEVDLKRKILDDLRHLESVVSHKITEIEADLEKLTKNR.

It belongs to the UPF0325 family.

This is UPF0325 protein ECA1027 from Pectobacterium atrosepticum (strain SCRI 1043 / ATCC BAA-672) (Erwinia carotovora subsp. atroseptica).